A 99-amino-acid chain; its full sequence is Large ribosomal subunit protein bL27 (99 aa).

Residues methionine 1–phenylalanine 12 constitute a propeptide that is removed on maturation. The interval histidine 15–arginine 36 is disordered.

It belongs to the bacterial ribosomal protein bL27 family. In terms of processing, the N-terminus is cleaved by ribosomal processing cysteine protease Prp.

In Lactobacillus johnsonii (strain CNCM I-12250 / La1 / NCC 533), this protein is Large ribosomal subunit protein bL27.